The chain runs to 496 residues: Lysine--tRNA ligase (496 aa).

Mg(2+) contacts are provided by E407 and E414.

This sequence belongs to the class-II aminoacyl-tRNA synthetase family. Homodimer. Mg(2+) serves as cofactor.

The protein localises to the cytoplasm. It catalyses the reaction tRNA(Lys) + L-lysine + ATP = L-lysyl-tRNA(Lys) + AMP + diphosphate. The protein is Lysine--tRNA ligase of Staphylococcus haemolyticus (strain JCSC1435).